Consider the following 892-residue polypeptide: Protein BNI4 (892 aa).

Phosphoserine occurs at positions 43 and 133. Disordered stretches follow at residues 185-287 and 305-387; these read DFLS…EDTS and KPVI…QDTE. Residues 208 to 223 are compositionally biased toward basic and acidic residues; the sequence is TILERDNNLPVKREEN. 2 stretches are compositionally biased toward polar residues: residues 224 to 236 and 270 to 280; these read TIINSETESTTHS and DSSAQRTTSAG. S281 bears the Phosphoserine mark. The span at 309-335 shows a compositional bias: polar residues; that stretch reads GNNSVTNEKNKMSSSSTFSMNIQTSLK. Residues 346–356 are compositionally biased toward low complexity; it reads SSSSIFNSFLK. Residues 357-371 show a composition bias toward basic and acidic residues; the sequence is GKIETSDSPRKEPMR. 2 positions are modified to phosphoserine: S364 and S394. T410 bears the Phosphothreonine mark. Phosphoserine occurs at positions 476, 500, and 503. Disordered stretches follow at residues 506–526, 618–644, and 685–734; these read RTRSTKSNKRSSMNSQRRSLT, SDEEKTEVERDVPKPREEPLKKDSERQ, and YATE…GDER. S618 carries the post-translational modification Phosphoserine. Positions 624-643 are enriched in basic and acidic residues; it reads EVERDVPKPREEPLKKDSER. T703 is subject to Phosphothreonine. Residues 707–719 are compositionally biased toward basic and acidic residues; the sequence is RNNKEDSYKERET. Phosphoserine occurs at positions 746 and 825.

May interact with CHS3 and seems to be an adapter (along with SKT5) to link CHS3 to septins.

The polypeptide is Protein BNI4 (BNI4) (Saccharomyces cerevisiae (strain ATCC 204508 / S288c) (Baker's yeast)).